An 800-amino-acid polypeptide reads, in one-letter code: MRNVKGGVWKNTEDEILKVAIMKYGLNQWARISSLLTRKSPAQCKARWHEWLDPSIKKTEWSKEEEEKLLHLAKIFPSQWKTIAPLVGRTASQCLERYNRLLDEVQRQQDNENGGGSGGGGTTTTTTTTTGENDPRRLRMGDIDPTPETKPAKPDPIDMDEDEKETLSEAKARLSNTQGKKEKRKFREKQLEEARRLAFLQKKRELKAAGINYNPKKKGKEKSWDISKEIPFYLKPKAGFYDVPDEELRDEPNKDASFIGKRVDQIENPNYLQRQEKLNKLEDIKKSKKEIFNLPQLISETSKSNDVEHSIKRTKLQLPEPQLTDDDIQEISDYEKLNGSGSGGGSGGVGVGEFPLPAPRTASISSTAANNNTNNIRTPMKQDTIMSEAQNLLALSNAQTPLKGGAGPNVSQTPLPKSVNNSTPFRTPNPLANQTPTQHNKKQSLNDSNEFAIEDKFKRQQGKNQLLSNLKNLPSPTIEYKLELPSELPTIEDDTTLELDNSEIHIREQQQLKHKEQFKLRNRSTVLKRNLPRSRNLFPINKNNNNNNNNNINQDELRILKEINRIISHDNKTFPNDSITPSSTFDDDDDDDNHHHHHDDIDNNSINDNDEKYENYDYFTNTELEFADKLIRDEIEQIKQELKQPLPSSNEILEEIDQIRSQFIYLPKENQFIEKSNANQTQLIENLQFEYDKTLNKIKNSSMKSVNLEKKLNIYNGGYQNRSNTIIKNIDDMFDQLEQSEIEYQCFVALKNNESIQMEKRLKSIENQVYDQCEIESRLQQKYAQLLNEKNLLKKKLSIF.

HTH myb-type domains lie at 1 to 56 and 57 to 106; these read MRNV…DPSI and KKTE…DEVQ. DNA-binding regions (H-T-H motif) lie at residues 29–52 and 80–102; these read WARI…HEWL and WKTI…NRLL. Disordered regions lie at residues 109 to 186, 334 to 378, 399 to 445, and 571 to 610; these read QDNE…KRKF, YEKL…NIRT, QTPL…KQSL, and NKTF…NDND. Gly residues predominate over residues 113–122; it reads NGGGSGGGGT. Basic and acidic residues predominate over residues 133-142; sequence NDPRRLRMGD. The segment covering 340 to 351 has biased composition (gly residues); it reads SGSGGGSGGVGV. Positions 361–376 are enriched in low complexity; that stretch reads TASISSTAANNNTNNI. Composition is skewed to polar residues over residues 409-445 and 573-584; these read NVSQ…KQSL and TFPNDSITPSST. Residues 592–601 are compositionally biased toward basic and acidic residues; it reads DNHHHHHDDI. Coiled-coil stretches lie at residues 621–700 and 748–800; these read NTEL…KIKN and VALK…LSIF.

It belongs to the CEF1 family. In terms of assembly, component of the precatalytic, catalytic and postcatalytic spliceosome complexes.

Its subcellular location is the nucleus. It is found in the cytoplasm. DNA-binding protein involved in cell cycle control. May act as a transcription activator. Plays a role in pre-mRNA splicing as core component of precatalytic, catalytic and postcatalytic spliceosomal complexes. May also play a role in the response to DNA damage (DDR). This is Cell division cycle 5-like protein (cdc5l) from Dictyostelium discoideum (Social amoeba).